Reading from the N-terminus, the 228-residue chain is MVDYLALLSSQNPYDRLDGWFKIDWLIQNNIVTKEKLIEMKDKFLDLLSYNDDTVKLHAWRMVPQLINKGIITVKDVKKYDFLSLLYDSEAWLLVKDLVNSGVIDIESVKKEKEKYIALLKGNELDRIASWSLILDIVNLGIIDKNDVENNKKYLLELFNFPAYDIRFNLLFLVAELISKGVLSPKELEPYEKKIEEIVKDKDFNQFVKIYEKDPRELESIGIHVFNS.

This is an uncharacterized protein from Acidianus ambivalens (Desulfurolobus ambivalens).